The chain runs to 553 residues: Retrotransposon Gag-like protein 3 (553 aa).

Residues 2-43 adopt a coiled-coil conformation; sequence VEDLAASYVTLKLENEILQAQVKRLMEENAALQAQIPELQKS. Disordered stretches follow at residues 38 to 274 and 474 to 514; these read PELQ…PLDP and SGGV…EAER. The segment covering 45-57 has biased composition (basic and acidic residues); it reads AVKEHEPLRKPSE. The span at 58–73 shows a compositional bias: low complexity; that stretch reads AQEPPESPEFPAARES. The segment covering 87–113 has biased composition (basic and acidic residues); sequence EPTKIREPREPSAISELREPPEIKEPQ. Positions 118–127 are enriched in polar residues; sequence TNESGESSAI. A compositionally biased stretch (basic and acidic residues) spans 132-147; that stretch reads GSPEIKEPHLPPKSKE. Polar residues predominate over residues 239-250; sequence QTVPEYQETSSQ. Over residues 474-483 the composition is skewed to low complexity; it reads SGGVDSSSSS. Polar residues predominate over residues 495 to 507; the sequence is TENQPVQATSNRP. A CCHC-type zinc finger spans residues 523–537; that stretch reads CLYCGHPGHFARDCP.

As to expression, expressed in embryonic myogenic progenitor cells, not expressed in adult and aged satellite cells.

The protein localises to the nucleus. Its function is as follows. May function as a transcriptional regulator. Plays a role in postnatal myogenesis, may be involved in the regulation of satellite cells self-renewal. This chain is Retrotransposon Gag-like protein 3, found in Mus musculus (Mouse).